Here is a 149-residue protein sequence, read N- to C-terminus: UPF0260 protein RCAP_rcc02083 (149 aa).

The protein belongs to the UPF0260 family.

The sequence is that of UPF0260 protein RCAP_rcc02083 from Rhodobacter capsulatus (strain ATCC BAA-309 / NBRC 16581 / SB1003).